The chain runs to 489 residues: Squalene monooxygenase (489 aa).

The helical transmembrane segment at 10-30 (VTYDALIVGAGVIGPCVATAL) threads the bilayer. Residues 21–22 (VI), 41–42 (ER), R49, R151, V167, D328, and M341 contribute to the FAD site. 2 consecutive transmembrane segments (helical) span residues 426–446 (FLAG…AVAF) and 464–484 (ALLE…PFLV).

It belongs to the squalene monooxygenase family. Requires FAD as cofactor.

Its subcellular location is the microsome membrane. The protein resides in the endoplasmic reticulum membrane. The catalysed reaction is squalene + reduced [NADPH--hemoprotein reductase] + O2 = (S)-2,3-epoxysqualene + oxidized [NADPH--hemoprotein reductase] + H2O + H(+). Its pathway is terpene metabolism; lanosterol biosynthesis; lanosterol from farnesyl diphosphate: step 2/3. Functionally, catalyzes the stereospecific oxidation of squalene to (S)-2,3-epoxysqualene, and is considered to be a rate-limiting enzyme in steroid biosynthesis. This is Squalene monooxygenase (ERG1) from Candida glabrata (strain ATCC 2001 / BCRC 20586 / JCM 3761 / NBRC 0622 / NRRL Y-65 / CBS 138) (Yeast).